The chain runs to 354 residues: Ornithine carbamoyltransferase, catabolic (354 aa).

Residues 67–70 (STRT), glutamine 94, arginine 118, and 145–148 (HPTQ) each bind carbamoyl phosphate. Residues asparagine 177, aspartate 241, and 245-246 (SM) each bind L-ornithine. Carbamoyl phosphate contacts are provided by residues 284 to 285 (CL) and arginine 329.

It belongs to the aspartate/ornithine carbamoyltransferase superfamily. OTCase family.

The protein resides in the cytoplasm. The catalysed reaction is carbamoyl phosphate + L-ornithine = L-citrulline + phosphate + H(+). The protein operates within amino-acid degradation; L-arginine degradation via ADI pathway; carbamoyl phosphate from L-arginine: step 2/2. Reversibly catalyzes the transfer of the carbamoyl group from carbamoyl phosphate (CP) to the N(epsilon) atom of ornithine (ORN) to produce L-citrulline. The polypeptide is Ornithine carbamoyltransferase, catabolic (arcB) (Lactococcus lactis subsp. cremoris (strain MG1363)).